Consider the following 612-residue polypeptide: Dihydroxy-acid dehydratase (612 aa).

Aspartate 81 serves as a coordination point for Mg(2+). Position 122 (cysteine 122) interacts with [2Fe-2S] cluster. The Mg(2+) site is built by aspartate 123 and lysine 124. Lysine 124 is modified (N6-carboxylysine). [2Fe-2S] cluster is bound at residue cysteine 195. A Mg(2+)-binding site is contributed by glutamate 491. Serine 517 serves as the catalytic Proton acceptor.

The protein belongs to the IlvD/Edd family. As to quaternary structure, homodimer. [2Fe-2S] cluster serves as cofactor. Requires Mg(2+) as cofactor.

The enzyme catalyses (2R)-2,3-dihydroxy-3-methylbutanoate = 3-methyl-2-oxobutanoate + H2O. It carries out the reaction (2R,3R)-2,3-dihydroxy-3-methylpentanoate = (S)-3-methyl-2-oxopentanoate + H2O. It functions in the pathway amino-acid biosynthesis; L-isoleucine biosynthesis; L-isoleucine from 2-oxobutanoate: step 3/4. It participates in amino-acid biosynthesis; L-valine biosynthesis; L-valine from pyruvate: step 3/4. Its function is as follows. Functions in the biosynthesis of branched-chain amino acids. Catalyzes the dehydration of (2R,3R)-2,3-dihydroxy-3-methylpentanoate (2,3-dihydroxy-3-methylvalerate) into 2-oxo-3-methylpentanoate (2-oxo-3-methylvalerate) and of (2R)-2,3-dihydroxy-3-methylbutanoate (2,3-dihydroxyisovalerate) into 2-oxo-3-methylbutanoate (2-oxoisovalerate), the penultimate precursor to L-isoleucine and L-valine, respectively. This Rhizobium etli (strain ATCC 51251 / DSM 11541 / JCM 21823 / NBRC 15573 / CFN 42) protein is Dihydroxy-acid dehydratase.